The chain runs to 382 residues: Serine/threonine-protein phosphatase 2A activator 2 (382 aa).

The interval 363 to 382 (SHKGVPTLGNRPGIKPIPFD) is disordered.

The protein belongs to the PTPA-type PPIase family.

The protein resides in the cytoplasm. It catalyses the reaction [protein]-peptidylproline (omega=180) = [protein]-peptidylproline (omega=0). Its function is as follows. PPIases accelerate the folding of proteins. It catalyzes the cis-trans isomerization of proline imidic peptide bonds in oligopeptides. Acts as a regulatory subunit for PP2A-like phosphatases modulating their activity or substrate specificity, probably by inducing a conformational change in the catalytic subunit, a direct target of the PPIase. Can reactivate inactive phosphatase PP2A-phosphatase methylesterase complexes (PP2Ai) in presence of ATP and Mg(2+) by dissociating the inactive form from the complex. In Cryptococcus neoformans var. neoformans serotype D (strain B-3501A) (Filobasidiella neoformans), this protein is Serine/threonine-protein phosphatase 2A activator 2 (RRD2).